Reading from the N-terminus, the 228-residue chain is Uracil-DNA glycosylase (228 aa).

The Proton acceptor role is filled by aspartate 71.

It belongs to the uracil-DNA glycosylase (UDG) superfamily. UNG family.

It is found in the cytoplasm. It catalyses the reaction Hydrolyzes single-stranded DNA or mismatched double-stranded DNA and polynucleotides, releasing free uracil.. In terms of biological role, excises uracil residues from the DNA which can arise as a result of misincorporation of dUMP residues by DNA polymerase or due to deamination of cytosine. The sequence is that of Uracil-DNA glycosylase from Thermobifida fusca (strain YX).